A 115-amino-acid polypeptide reads, in one-letter code: Large ribosomal subunit protein uL18 (115 aa).

Belongs to the universal ribosomal protein uL18 family. In terms of assembly, part of the 50S ribosomal subunit; part of the 5S rRNA/L5/L18/L25 subcomplex. Contacts the 5S and 23S rRNAs.

This is one of the proteins that bind and probably mediate the attachment of the 5S RNA into the large ribosomal subunit, where it forms part of the central protuberance. The chain is Large ribosomal subunit protein uL18 from Vesicomyosocius okutanii subsp. Calyptogena okutanii (strain HA).